The chain runs to 230 residues: ATP synthase subunit a (230 aa).

A run of 5 helical transmembrane segments spans residues 17 to 37 (LPIT…FIMA), 78 to 98 (IFPF…IGVI), 107 to 127 (DLSV…WFGI), 165 to 187 (LFGN…GFLV), and 198 to 218 (EAII…AGGI).

This sequence belongs to the ATPase A chain family. F-type ATPases have 2 components, CF(1) - the catalytic core - and CF(0) - the membrane proton channel. CF(1) has five subunits: alpha(3), beta(3), gamma(1), delta(1), epsilon(1). CF(0) has three main subunits: a(1), b(2) and c(9-12). The alpha and beta chains form an alternating ring which encloses part of the gamma chain. CF(1) is attached to CF(0) by a central stalk formed by the gamma and epsilon chains, while a peripheral stalk is formed by the delta and b chains.

It is found in the cell inner membrane. Functionally, key component of the proton channel; it plays a direct role in the translocation of protons across the membrane. The chain is ATP synthase subunit a from Legionella pneumophila subsp. pneumophila (strain Philadelphia 1 / ATCC 33152 / DSM 7513).